The following is a 268-amino-acid chain: Tryptophan synthase alpha chain (268 aa).

Catalysis depends on proton acceptor residues Glu-47 and Asp-58.

Belongs to the TrpA family. As to quaternary structure, tetramer of two alpha and two beta chains.

It carries out the reaction (1S,2R)-1-C-(indol-3-yl)glycerol 3-phosphate + L-serine = D-glyceraldehyde 3-phosphate + L-tryptophan + H2O. Its pathway is amino-acid biosynthesis; L-tryptophan biosynthesis; L-tryptophan from chorismate: step 5/5. The alpha subunit is responsible for the aldol cleavage of indoleglycerol phosphate to indole and glyceraldehyde 3-phosphate. This Chlorobium phaeobacteroides (strain BS1) protein is Tryptophan synthase alpha chain.